The following is a 226-amino-acid chain: Thymidylate kinase (226 aa).

Residue 16–23 (GIDGAGKT) coordinates ATP.

It belongs to the thymidylate kinase family.

The catalysed reaction is dTMP + ATP = dTDP + ADP. Its function is as follows. Phosphorylation of dTMP to form dTDP in both de novo and salvage pathways of dTTP synthesis. The protein is Thymidylate kinase of Xanthomonas euvesicatoria pv. vesicatoria (strain 85-10) (Xanthomonas campestris pv. vesicatoria).